We begin with the raw amino-acid sequence, 268 residues long: L-aspartate dehydrogenase (268 aa).

A125 and N191 together coordinate NAD(+). Residue H221 is part of the active site.

It belongs to the L-aspartate dehydrogenase family.

The enzyme catalyses L-aspartate + NADP(+) + H2O = oxaloacetate + NH4(+) + NADPH + H(+). It catalyses the reaction L-aspartate + NAD(+) + H2O = oxaloacetate + NH4(+) + NADH + H(+). It participates in cofactor biosynthesis; NAD(+) biosynthesis; iminoaspartate from L-aspartate (dehydrogenase route): step 1/1. Specifically catalyzes the NAD or NADP-dependent dehydrogenation of L-aspartate to iminoaspartate. The chain is L-aspartate dehydrogenase from Brucella anthropi (strain ATCC 49188 / DSM 6882 / CCUG 24695 / JCM 21032 / LMG 3331 / NBRC 15819 / NCTC 12168 / Alc 37) (Ochrobactrum anthropi).